The sequence spans 236 residues: MQKPNIIIKISGASLQDKNSNDCYSYQRINSLADQLKSLAKKYNIGLIVGGGNIFRGKLAKDFGVEINKADYIGMLATVINSTLLESKLQSLGLKTKVLSALEVKGLTNEINPKSLAEVFSDCQIAFFSGGTGNSHFTTDTATVLRAIQINAQLVLIGKDGVDGVYTDDPKKNKKAKFIEQITYQQALNDQLRVMDLTAFSLAKDHNLKLLIFNIEAEQSIIKTIENKNKHTKITN.

An ATP-binding site is contributed by 9-12 (KISG). Position 51 (Gly-51) interacts with UMP. Residues Gly-52 and Arg-56 each coordinate ATP. UMP contacts are provided by residues Asp-71 and 132-139 (TGNSHFTT). ATP-binding residues include Tyr-166 and Asp-169.

This sequence belongs to the UMP kinase family. In terms of assembly, homohexamer.

It is found in the cytoplasm. It catalyses the reaction UMP + ATP = UDP + ADP. It functions in the pathway pyrimidine metabolism; CTP biosynthesis via de novo pathway; UDP from UMP (UMPK route): step 1/1. Its activity is regulated as follows. Inhibited by UTP. Its function is as follows. Catalyzes the reversible phosphorylation of UMP to UDP. This is Uridylate kinase from Mycoplasmoides gallisepticum (strain R(low / passage 15 / clone 2)) (Mycoplasma gallisepticum).